Reading from the N-terminus, the 858-residue chain is Protein lines (858 aa).

The interval 1 to 102 (MDTSSAAGSG…NSPTTTPCSS (102 aa)) is disordered. 2 stretches are compositionally biased toward low complexity: residues 20–30 (STVATSTTSAS) and 65–102 (LDAN…PCSS).

This sequence belongs to the protein lines family. Interacts with drm. As to expression, expressed throughout the embryo, including the hindgut, posterior midgut and embryonic epidermis.

The protein resides in the cytoplasm. Its subcellular location is the nucleus. Its function is as follows. Has a dual role as a segment polarity protein and as a modulator of the Abd-B protein. Required for Abd-B to activate the transcription of genes (including ems, cut and sal) that are involved in posterior spiracle morphogenesis. Also required for Abd-B to form an eighth abdominal denticle belt. Acts in a hierarchy downstream of drm and upstream of bowl during foregut and hindgut patterning and morphogenesis. Involved in cell rearrangement during elongation of the embryonic hindgut. Required to regulate expression of embryonic hindgut patterning genes in order to establish the large intestine and at least some rectum, and to repress small intestine fate. Required for late wingless (wg)-dependent cell fate specification in the dorsal embryonic epidermis. Acts in concert with wg to regulate expression of wg itself and also to regulate wg-target genes. May have a role in ventral epidermal patterning, independent of wg signaling. This is Protein lines from Drosophila melanogaster (Fruit fly).